Reading from the N-terminus, the 253-residue chain is tRNA pseudouridine synthase A (253 aa).

The active-site Nucleophile is Asp53. Tyr112 serves as a coordination point for substrate.

It belongs to the tRNA pseudouridine synthase TruA family. As to quaternary structure, homodimer.

It catalyses the reaction uridine(38/39/40) in tRNA = pseudouridine(38/39/40) in tRNA. Its function is as follows. Formation of pseudouridine at positions 38, 39 and 40 in the anticodon stem and loop of transfer RNAs. This Lactococcus lactis subsp. cremoris (strain MG1363) protein is tRNA pseudouridine synthase A.